The chain runs to 354 residues: Biotin synthase (354 aa).

The Radical SAM core domain occupies 41 to 265; that stretch reads NEVQISRLLS…LMPHSRVRLS (225 aa). Positions 56, 60, and 63 each coordinate [4Fe-4S] cluster. 4 residues coordinate [2Fe-2S] cluster: Cys-100, Cys-131, Cys-191, and Arg-263.

It belongs to the radical SAM superfamily. Biotin synthase family. Homodimer. The cofactor is [4Fe-4S] cluster. Requires [2Fe-2S] cluster as cofactor.

It catalyses the reaction (4R,5S)-dethiobiotin + (sulfur carrier)-SH + 2 reduced [2Fe-2S]-[ferredoxin] + 2 S-adenosyl-L-methionine = (sulfur carrier)-H + biotin + 2 5'-deoxyadenosine + 2 L-methionine + 2 oxidized [2Fe-2S]-[ferredoxin]. The protein operates within cofactor biosynthesis; biotin biosynthesis; biotin from 7,8-diaminononanoate: step 2/2. In terms of biological role, catalyzes the conversion of dethiobiotin (DTB) to biotin by the insertion of a sulfur atom into dethiobiotin via a radical-based mechanism. The polypeptide is Biotin synthase (Shewanella woodyi (strain ATCC 51908 / MS32)).